We begin with the raw amino-acid sequence, 712 residues long: Patatin-like phospholipase domain-containing protein ACLA_029670 (712 aa).

Polar residues predominate over residues 1–10 (MTSAEKSATR). Residues 1–20 (MTSAEKSATRNIYDPSALPD) form a disordered region. Residues 85–105 (WPFLFIVFAWITVLGIAYALT) traverse the membrane as a helical segment. A PNPLA domain is found at 275–466 (LCLSGGATFA…RTDIPIKALN (192 aa)). The short motif at 306-310 (GTSGG) is the GXSXG element. Ser-308 acts as the Nucleophile in catalysis. Asp-453 acts as the Proton acceptor in catalysis. A compositionally biased stretch (basic and acidic residues) spans 649 to 664 (FPERHSDYKDESHYTE). Positions 649 to 686 (FPERHSDYKDESHYTEVSDSLSTNSSRPHTPDARRGSI) are disordered. The span at 665-676 (VSDSLSTNSSRP) shows a compositional bias: polar residues. Over residues 677 to 686 (HTPDARRGSI) the composition is skewed to basic and acidic residues.

The protein belongs to the PLPL family.

It localises to the membrane. In terms of biological role, probable lipid hydrolase. This Aspergillus clavatus (strain ATCC 1007 / CBS 513.65 / DSM 816 / NCTC 3887 / NRRL 1 / QM 1276 / 107) protein is Patatin-like phospholipase domain-containing protein ACLA_029670.